The primary structure comprises 508 residues: MYHLIPFAAILGMTYALSLAIYRLFLSPLAKFPGPKLAAVTGWVETYYQLFYGEGGQFIFLYKEWHQKYGPIIRINPWEVHISDSCFFEILYSTNRPLKKLPHLAKVFDNELSGFSTVSPELHRIRRKAVSHLFSKGEVLKRGAQIQSAMDRLSERLKLDFLGHGNRVICMNDMWSVYTADLIAEYAFGRHYGFIDQPNFEADFTKALVHLLEPTHLAQQFPWLTDILKALPTSVLEFLHPHMAAFNKFKAANQVRIAKANFAKDLSKGGTMFSAIFNSDLPDEEKSIERAHQEALAFAAAGAETVAATLSVASFHLLHDPKIRRRLDEELATVVPDSRSSDASMPSLEILWQLPYLTGIINEALRLSYGSYARIPRTSDTPIQYDEWTIPPGVVFSMDIAPAHHDERIFPDSYSFKPERWLDNPQAFDGKPLTRYLFSFSRGTRSCLGMQLALAEMYIGIVSFFSRFDAHLFETDLTDITFVRDRFAPRPRIGSRGVRVNRLTTRKF.

Cys-447 is a binding site for heme.

It belongs to the cytochrome P450 family. The cofactor is heme.

The protein operates within mycotoxin biosynthesis. Cytochrome P450 monooxygenase; part of the gene cluster that mediates the biosynthesis of brefeldin A (BFA), a protein transport inhibitor that shows antiviral, antifungal, and antitumor properties. The proposed biosynthesis of BFA involves formation of an acyclic polyketide chain that is differentially tailored throughout the backbone. The highly reducing polyketide synthase Bref-PKS is proposed to synthesize the precisely reduced octaketide precursor, which could then be directly offloaded by the thiohydrolase enzyme Bref-TH followed by a cytochrome P450 monooxygenase-mediated formation of the cyclopentane ring and macrocyclization to afford 7-deoxy BFA. Alternatively, the first ring annulation can also occur on the ACP-tethered intermediate before the thiohydrolase release and lactonization. The C7-hydroxylation by another cytochrome P450 monooxygenase is believed to be the final step in the process to obtain the final structure of BFA. In addition to the HRPKS Bref-PKS and the thiohydrolase Bref-TH, the brefeldin A biosynthesis cluster contains 4 cytochrome p450 monooxygenases (called orf3 to orf6), as well a the probable cluster-specific transcription regulator orf8. This chain is Cytochrome P450 monooxygenase orf4, found in Eupenicillium brefeldianum (Penicillium brefeldianum).